The primary structure comprises 210 residues: Ribosomal RNA large subunit methyltransferase E (210 aa).

S-adenosyl-L-methionine is bound by residues G67, W69, D87, D103, and D128. The active-site Proton acceptor is K168.

The protein belongs to the class I-like SAM-binding methyltransferase superfamily. RNA methyltransferase RlmE family.

The protein resides in the cytoplasm. It carries out the reaction uridine(2552) in 23S rRNA + S-adenosyl-L-methionine = 2'-O-methyluridine(2552) in 23S rRNA + S-adenosyl-L-homocysteine + H(+). Its function is as follows. Specifically methylates the uridine in position 2552 of 23S rRNA at the 2'-O position of the ribose in the fully assembled 50S ribosomal subunit. This chain is Ribosomal RNA large subunit methyltransferase E, found in Psychrobacter cryohalolentis (strain ATCC BAA-1226 / DSM 17306 / VKM B-2378 / K5).